The primary structure comprises 369 residues: H-2 class I histocompatibility antigen, K-K alpha chain (369 aa).

An N-terminal signal peptide occupies residues 1 to 21 (MAPCMLLLLLAAALAPTQTRA). Residues 22–111 (GPHSLRYFHT…ALRYYNQSAG (90 aa)) form an alpha-1 region. Over 22-305 (GPHSLRYFHT…EPPPSTVSNT (284 aa)) the chain is Extracellular. Asparagine 107 is a glycosylation site (N-linked (GlcNAc...) asparagine). The alpha-2 stretch occupies residues 112–203 (GSHTFQRMYG…QLGNATLPRT (92 aa)). Cysteine 122 and cysteine 185 are joined by a disulfide. Residue asparagine 197 is glycosylated (N-linked (GlcNAc...) asparagine). Residues 204 to 295 (DSPKAHVTRH…GLPEPLTLRW (92 aa)) form an alpha-3 region. An Ig-like C1-type domain is found at 206 to 294 (PKAHVTRHSR…QGLPEPLTLR (89 aa)). A disulfide bridge connects residues cysteine 224 and cysteine 280. The tract at residues 296-305 (EPPPSTVSNT) is connecting peptide. The helical transmembrane segment at 306–328 (VIIAVLVVLGAAIVTGAVVAFVM) threads the bilayer. Over 329 to 369 (KMRRRNTGGKGGDYALAPGSQTSDLSLPDCKVMVHDPHSLA) the chain is Cytoplasmic. Residues serine 351 and serine 354 each carry the phosphoserine modification.

Belongs to the MHC class I family. Heterodimer of an alpha chain and a beta chain (beta-2-microglobulin).

The protein resides in the membrane. In terms of biological role, involved in the presentation of foreign antigens to the immune system. In Mus musculus (Mouse), this protein is H-2 class I histocompatibility antigen, K-K alpha chain (H2-K1).